We begin with the raw amino-acid sequence, 100 residues long: Large ribosomal subunit protein uL23 (100 aa).

It belongs to the universal ribosomal protein uL23 family. Part of the 50S ribosomal subunit. Contacts protein L29, and trigger factor when it is bound to the ribosome.

In terms of biological role, one of the early assembly proteins it binds 23S rRNA. One of the proteins that surrounds the polypeptide exit tunnel on the outside of the ribosome. Forms the main docking site for trigger factor binding to the ribosome. In Xylella fastidiosa (strain M23), this protein is Large ribosomal subunit protein uL23.